The sequence spans 194 residues: Chromophore lyase CpcT/CpeT 1 (194 aa).

It belongs to the CpcT/CpeT biliprotein lyase family.

Covalently attaches a chromophore to Cys residue(s) of phycobiliproteins. This chain is Chromophore lyase CpcT/CpeT 1, found in Microcystis aeruginosa (strain NIES-843 / IAM M-2473).